Here is a 379-residue protein sequence, read N- to C-terminus: Transcription factor bHLH122 (379 aa).

Residues 1–17 are compositionally biased toward basic and acidic residues; that stretch reads MESEFQQHHFLLHDHQH. The tract at residues 1 to 21 is disordered; the sequence is MESEFQQHHFLLHDHQHQRPR. Phosphoserine is present on S74. 3 disordered regions span residues 79-98, 133-156, and 190-286; these read TFNSDGTEKKPPEVKTEDED, SVSRNKRPREKDDRTPVNNLARHN, and TSNT…MSLP. Residues 84–93 show a composition bias toward basic and acidic residues; sequence GTEKKPPEVK. The span at 190–200 shows a compositional bias: polar residues; sequence TSNTEASSLTP. Phosphoserine is present on residues S213 and S234. Residues 235–261 show a composition bias toward polar residues; sequence GGFNRSFGNEGSASSKLTALARTQSGG. The span at 265–274 shows a compositional bias: basic and acidic residues; that stretch reads YKTKDEDSAS. A bHLH domain is found at 310–360; the sequence is CATHPRSIAERVRRTKISERMRKLQDLVPNMDTQTNTADMLDLAVQYIKDL.

In terms of assembly, homodimer.

The protein localises to the nucleus. This Arabidopsis thaliana (Mouse-ear cress) protein is Transcription factor bHLH122 (BHLH122).